Reading from the N-terminus, the 297-residue chain is UDP-N-acetylenolpyruvoylglucosamine reductase (297 aa).

Positions 26–191 (KSGGTADWLF…VAARFRGHPG (166 aa)) constitute an FAD-binding PCMH-type domain. The active site involves Arg-171. Ser-220 acts as the Proton donor in catalysis. The active site involves Glu-290.

The protein belongs to the MurB family. The cofactor is FAD.

Its subcellular location is the cytoplasm. The catalysed reaction is UDP-N-acetyl-alpha-D-muramate + NADP(+) = UDP-N-acetyl-3-O-(1-carboxyvinyl)-alpha-D-glucosamine + NADPH + H(+). Its pathway is cell wall biogenesis; peptidoglycan biosynthesis. In terms of biological role, cell wall formation. The sequence is that of UDP-N-acetylenolpyruvoylglucosamine reductase from Novosphingobium aromaticivorans (strain ATCC 700278 / DSM 12444 / CCUG 56034 / CIP 105152 / NBRC 16084 / F199).